The following is a 1141-amino-acid chain: Myosin-binding protein C, slow-type (1141 aa).

A compositionally biased stretch (basic and acidic residues) spans 1–10 (MPEPTKKEEN). The tract at residues 1–51 (MPEPTKKEENEVPAPAPPPEEPSKEKEAGTTPAKDWTLVETPPGEEQAKQN) is disordered. Ig-like C2-type domains follow at residues 72-144 (GEDI…RCEV), 251-340 (SAAF…VREP), 341-431 (PIMV…VDLK), 432-520 (PLKI…HVID), and 522-619 (PKII…VVDF). At Thr-406 the chain carries Phosphothreonine. Ser-611 is subject to Phosphoserine. Fibronectin type-III domains lie at 622 to 721 (PPVA…TSPP) and 722 to 833 (TLLT…VKEI). Phosphothreonine is present on Thr-798. Position 823 is a phosphotyrosine (Tyr-823). Residues 837 to 931 (PKIRIPRHLK…ASIDIQIIDR (95 aa)) enclose the Ig-like C2-type 6 domain. One can recognise a Fibronectin type-III 3 domain in the interval 934–1029 (PPQIVKIEDV…TKESAVIARD (96 aa)). In terms of domain architecture, Ig-like C2-type 7 spans 1047 to 1141 (PMFTQPLVNT…CKLEVKVIAQ (95 aa)).

The protein belongs to the immunoglobulin superfamily. MyBP family. Interacts with USP25 (isoform USP25m only); the interaction prevents proteasomal degradation of MYBPC1.

Its function is as follows. Thick filament-associated protein located in the crossbridge region of vertebrate striated muscle a bands. Slow skeletal protein that binds to both myosin and actin. In vitro, binds to native thin filaments and modifies the activity of actin-activated myosin ATPase. May modulate muscle contraction or may play a more structural role. The protein is Myosin-binding protein C, slow-type (MYBPC1) of Homo sapiens (Human).